The chain runs to 418 residues: Endoglucanase EG-II (418 aa).

The first 21 residues, 1–21, serve as a signal peptide directing secretion; it reads MNKSVAPLLLAASILYGGAAA. At Gln22 the chain carries Pyrrolidone carboxylic acid. In terms of domain architecture, CBM1 spans 22–57; it reads QQTVWGQCGGIGWSGPTNCAPGSACSTLNPYYAQCI. The interval 58 to 91 is linker; that stretch reads PGATTITTSTRPPSGPTTTTRATSTSSSTPPTSS. The tract at residues 63 to 91 is disordered; the sequence is ITTSTRPPSGPTTTTRATSTSSSTPPTSS. Residues 92–418 form a catalytic region; that stretch reads GVRFAGVNIA…SLVSSCLARK (327 aa). Cys107 and Cys113 form a disulfide bridge. N-linked (GlcNAc) asparagine glycosylation occurs at Asn124. The cysteines at positions 183 and 190 are disulfide-linked. The active-site Proton donor/acceptor is the Glu239. 2 disulfides stabilise this stretch: Cys323–Cys359 and Cys364–Cys414. Residue Glu350 is the Nucleophile of the active site.

It belongs to the glycosyl hydrolase 5 (cellulase A) family.

The protein resides in the secreted. The catalysed reaction is Endohydrolysis of (1-&gt;4)-beta-D-glucosidic linkages in cellulose, lichenin and cereal beta-D-glucans.. Endoglucanase (EG) that cleaves the internal beta-1,4-glucosidic bonds in cellulose. The degradation of cellulose involves an interplay between different cellulolytic enzymes. Hydrolysis starts with EGs, which cut internal glycosidic linkages to reduce the polymerization degree of the substrate and creates new chain ends for exocellobiohydrolases (CBHs). The CBH release the disaccharide cellobiose from the non-reducing end of the cellulose polymer chain. Finally, beta-1,4-glucosidases hydrolyze the cellobiose and other short cello-oligosaccharides into glucose units. The sequence is that of Endoglucanase EG-II (egl2) from Hypocrea jecorina (strain ATCC 56765 / BCRC 32924 / NRRL 11460 / Rut C-30) (Trichoderma reesei).